Here is a 437-residue protein sequence, read N- to C-terminus: tRNA-2-methylthio-N(6)-dimethylallyladenosine synthase (437 aa).

Residues 1-115 enclose the MTTase N-terminal domain; sequence MKVYIETMGC…ISQVIHKEKA (115 aa). [4Fe-4S] cluster is bound by residues cysteine 10, cysteine 46, cysteine 78, cysteine 148, cysteine 152, and cysteine 155. Positions 134–367 constitute a Radical SAM core domain; sequence KKAQIRSLLN…QNRHKEILEE (234 aa). The TRAM domain maps to 370-436; it reads KLEVGKTHVV…KGRLIAAIKG (67 aa).

The protein belongs to the methylthiotransferase family. MiaB subfamily. As to quaternary structure, monomer. Requires [4Fe-4S] cluster as cofactor.

The protein localises to the cytoplasm. The catalysed reaction is N(6)-dimethylallyladenosine(37) in tRNA + (sulfur carrier)-SH + AH2 + 2 S-adenosyl-L-methionine = 2-methylsulfanyl-N(6)-dimethylallyladenosine(37) in tRNA + (sulfur carrier)-H + 5'-deoxyadenosine + L-methionine + A + S-adenosyl-L-homocysteine + 2 H(+). Catalyzes the methylthiolation of N6-(dimethylallyl)adenosine (i(6)A), leading to the formation of 2-methylthio-N6-(dimethylallyl)adenosine (ms(2)i(6)A) at position 37 in tRNAs that read codons beginning with uridine. This Helicobacter pylori (strain HPAG1) protein is tRNA-2-methylthio-N(6)-dimethylallyladenosine synthase.